Reading from the N-terminus, the 311-residue chain is MTDYRTQPINQKNADFVEQVADRIEEMQLEGRSLWQDAKRRFFRNKAAVASLIILAFIIIFITVAPWFFPFTYEDTDWNMMSAAPTMEGYHFFGTDASGRDLLVRTAIGGRISLLVGIAGAFISVTIGTIYGAISGYVGGKTDMLMMRFLEILSSFPFMFFVILLVTLFGQNIFLIFIAIGAIAWLGLARIVRGQTLSLKNKEFVEAAIVCGVPRRQIILKHIIPNVLGLVAVYASLEVPGLILFESFLSFLGLGTQEPMSSWGALLSDGAAQMEVSPWLLIFPAFFLCLTLFCFNFIGDGLRDALDPKDR.

Topologically, residues 1 to 48 (MTDYRTQPINQKNADFVEQVADRIEEMQLEGRSLWQDAKRRFFRNKAA) are cytoplasmic. The helical transmembrane segment at 49-69 (VASLIILAFIIIFITVAPWFF) threads the bilayer. The Periplasmic segment spans residues 70 to 113 (PFTYEDTDWNMMSAAPTMEGYHFFGTDASGRDLLVRTAIGGRIS). An ABC transmembrane type-1 domain is found at 110–299 (GRISLLVGIA…LTLFCFNFIG (190 aa)). A helical transmembrane segment spans residues 114–134 (LLVGIAGAFISVTIGTIYGAI). Over 135 to 146 (SGYVGGKTDMLM) the chain is Cytoplasmic. Residues 147–169 (MRFLEILSSFPFMFFVILLVTLF) form a helical membrane-spanning segment. Residues 170 to 172 (GQN) lie on the Periplasmic side of the membrane. The helical transmembrane segment at 173–192 (IFLIFIAIGAIAWLGLARIV) threads the bilayer. Over 193–222 (RGQTLSLKNKEFVEAAIVCGVPRRQIILKH) the chain is Cytoplasmic. A helical transmembrane segment spans residues 223-243 (IIPNVLGLVAVYASLEVPGLI). Over 244–278 (LFESFLSFLGLGTQEPMSSWGALLSDGAAQMEVSP) the chain is Periplasmic. A helical transmembrane segment spans residues 279–299 (WLLIFPAFFLCLTLFCFNFIG). Over 300–311 (DGLRDALDPKDR) the chain is Cytoplasmic.

This sequence belongs to the binding-protein-dependent transport system permease family. OppBC subfamily. The complex is composed of two ATP-binding proteins (OppD and OppF), two transmembrane proteins (OppB and OppC) and a solute-binding protein (OppA).

Its subcellular location is the cell inner membrane. Part of the ABC transporter complex OppABCDF involved in the uptake of oligopeptides. Probably responsible for the translocation of the substrate across the membrane. This Haemophilus influenzae (strain ATCC 51907 / DSM 11121 / KW20 / Rd) protein is Oligopeptide transport system permease protein OppC (oppC).